The following is a 269-amino-acid chain: Protein RKD1 (269 aa).

The RWP-RK domain maps to 106-195; sequence TTTTKKRRCR…EKMEGEENED (90 aa). Positions 175-216 form a coiled coil; the sequence is LQKLISNVKELEKMEGEENEDKLRNALEKLEKEKKTIEKLPD. Positions 230–269 are disordered; sequence CFKANHKRKRRSGMSTPITSSSSSASASSSSYSSVSGFER. Positions 249 to 269 are enriched in low complexity; that stretch reads SSSSSASASSSSYSSVSGFER.

It is found in the nucleus. Functionally, putative transcription factor. In Arabidopsis thaliana (Mouse-ear cress), this protein is Protein RKD1 (RKD1).